A 664-amino-acid chain; its full sequence is Probable L-type lectin-domain containing receptor kinase V.3 (664 aa).

The N-terminal stretch at 1-26 (MSMSCKINWLMVLVIIALSNLESSLG) is a signal peptide. Residues 27 to 278 (RLVFEGSAGL…YPKAESQVKL (252 aa)) are Extracellular-facing. Positions 28-250 (LVFEGSAGLM…AIHYMWMWYV (223 aa)) are legume-lectin like. 5 N-linked (GlcNAc...) asparagine glycosylation sites follow: Asn-69, Asn-116, Asn-122, Asn-174, and Asn-197. A helical transmembrane segment spans residues 279–299 (IVLVTFLTLALFVALAASALI). Over 300–664 (VFFYKRHKKL…LPSGRPRLFL (365 aa)) the chain is Cytoplasmic. A Protein kinase domain is found at 335 to 617 (NGFKQLLGEG…GVSELPDNLL (283 aa)). Residues 341–349 (LGEGGFGPV) and Lys-364 contribute to the ATP site. Asp-461 serves as the catalytic Proton acceptor.

The protein in the C-terminal section; belongs to the protein kinase superfamily. Ser/Thr protein kinase family. This sequence in the N-terminal section; belongs to the leguminous lectin family.

It localises to the cell membrane. The enzyme catalyses L-seryl-[protein] + ATP = O-phospho-L-seryl-[protein] + ADP + H(+). It carries out the reaction L-threonyl-[protein] + ATP = O-phospho-L-threonyl-[protein] + ADP + H(+). The protein is Probable L-type lectin-domain containing receptor kinase V.3 (LECRK53) of Arabidopsis thaliana (Mouse-ear cress).